Here is a 177-residue protein sequence, read N- to C-terminus: Large ribosomal subunit protein uL6 (177 aa).

This sequence belongs to the universal ribosomal protein uL6 family. As to quaternary structure, part of the 50S ribosomal subunit.

This protein binds to the 23S rRNA, and is important in its secondary structure. It is located near the subunit interface in the base of the L7/L12 stalk, and near the tRNA binding site of the peptidyltransferase center. The chain is Large ribosomal subunit protein uL6 from Rickettsia conorii (strain ATCC VR-613 / Malish 7).